A 394-amino-acid chain; its full sequence is Elongation factor Tu (394 aa).

The tr-type G domain occupies 10–205; that stretch reads KPHMNVGTIG…TMDNYFDLPE (196 aa). The G1 stretch occupies residues 19–26; it reads GHVDHGKT. 19–26 lines the GTP pocket; the sequence is GHVDHGKT. Thr26 provides a ligand contact to Mg(2+). The segment at 61 to 65 is G2; it reads GITIN. Positions 82 to 85 are G3; it reads DCPG. Residues 82 to 86 and 137 to 140 each bind GTP; these read DCPGH and NKLD. Residues 137 to 140 are G4; sequence NKLD. Residues 173–175 are G5; it reads SAF.

Belongs to the TRAFAC class translation factor GTPase superfamily. Classic translation factor GTPase family. EF-Tu/EF-1A subfamily. As to quaternary structure, monomer.

The protein localises to the cytoplasm. The catalysed reaction is GTP + H2O = GDP + phosphate + H(+). In terms of biological role, GTP hydrolase that promotes the GTP-dependent binding of aminoacyl-tRNA to the A-site of ribosomes during protein biosynthesis. The polypeptide is Elongation factor Tu (Borrelia duttonii (strain Ly)).